Reading from the N-terminus, the 65-residue chain is Putative antitoxin PF2058 (65 aa).

The protein belongs to the UPF0165 family.

Functionally, possibly the antitoxin component of a type II toxin-antitoxin (TA) system. The protein is Putative antitoxin PF2058 of Pyrococcus furiosus (strain ATCC 43587 / DSM 3638 / JCM 8422 / Vc1).